The primary structure comprises 209 residues: Claudin-4 (209 aa).

Topologically, residues 1 to 7 are cytoplasmic; it reads MASMGLQ. The segment at 1-103 is interaction with EPHA2; the sequence is MASMGLQVMG…GVLLSVVGGK (103 aa). Residues 8-28 form a helical membrane-spanning segment; sequence VMGIALAVLGWLAVMLCCALP. Over 29–81 the chain is Extracellular; the sequence is MWRVTAFIGSNIVTSQTIWEGLWMNCVVQSTGQMQCKVYDSLLALPQDLQAAR. A disulfide bridge connects residues Cys54 and Cys64. A helical transmembrane segment spans residues 82-102; sequence ALVIISIIVAALGVLLSVVGG. The Cytoplasmic segment spans residues 103–117; that stretch reads KCTNCLEDESAKAKT. A helical transmembrane segment spans residues 118 to 138; the sequence is MIVAGVVFLLAGLMVIVPVSW. The Extracellular segment spans residues 139 to 160; sequence TAHNIIQDFYNPLVASGQKREM. A helical membrane pass occupies residues 161–181; the sequence is GASLYVGWAASGLLLLGGGLL. Topologically, residues 182 to 209 are cytoplasmic; that stretch reads CCNCPPRTDKPYSAKYSAARSAAASNYV. Residue Tyr208 is modified to Phosphotyrosine; by EPHA2. Residues 208–209 form an interactions with TJP1, TJP2 and TJP3 region; it reads YV.

This sequence belongs to the claudin family. As to quaternary structure, can form heteropolymeric strands with other claudins. Interacts with CLDN8. Interacts with CLDN1. Directly interacts with TJP1/ZO-1. Interacts with TJP2/ZO-2 and TJP3/ZO-3. Interacts with EPHA2; phosphorylates CLDN4 and may regulate tight junctions. In terms of assembly, (Microbial infection) Interacts (via both extracellular domains) with Clostridium perfringens enterotoxin CPE; the interaction may disrupt claudin assembly in tight junctions. Post-translationally, phosphorylated. Phosphorylation by EPHA2 is stimulated by EFNA1 and alters interaction with TJP1.

The protein resides in the cell junction. Its subcellular location is the tight junction. The protein localises to the cell membrane. It carries out the reaction chloride(in) = chloride(out). It catalyses the reaction bromide(in) = bromide(out). The catalysed reaction is iodide(out) = iodide(in). The enzyme catalyses fluoride(in) = fluoride(out). Functionally, can associate with other claudins to regulate tight junction structural and functional strand dynamics. May coassemble with CLDN8 into tight junction strands containing anion-selective channels that convey paracellular chloride permeability in renal collecting ducts. May integrate into CLDN3 strands to modulate localized tight junction barrier properties. May disrupt strand assembly of channel-forming CLDN2 and CLDN15 and inhibit cation conductance. Cannot form tight junction strands on its own. The polypeptide is Claudin-4 (Homo sapiens (Human)).